The chain runs to 418 residues: Tryptophan synthase beta chain (418 aa).

Over residues 1 to 18 (MTSTLPKASQPDPSSLQP) the composition is skewed to polar residues. Residues 1-28 (MTSTLPKASQPDPSSLQPSARPGAHGRF) are disordered. N6-(pyridoxal phosphate)lysine is present on lysine 111.

This sequence belongs to the TrpB family. As to quaternary structure, tetramer of two alpha and two beta chains. Pyridoxal 5'-phosphate serves as cofactor.

The catalysed reaction is (1S,2R)-1-C-(indol-3-yl)glycerol 3-phosphate + L-serine = D-glyceraldehyde 3-phosphate + L-tryptophan + H2O. The protein operates within amino-acid biosynthesis; L-tryptophan biosynthesis; L-tryptophan from chorismate: step 5/5. Functionally, the beta subunit is responsible for the synthesis of L-tryptophan from indole and L-serine. In Synechococcus sp. (strain CC9902), this protein is Tryptophan synthase beta chain.